Here is a 502-residue protein sequence, read N- to C-terminus: RNA polymerase sigma factor sigA (502 aa).

Residues 1–23 constitute a chloroplast transit peptide; the sequence is MATAAVIGLNTGKRLLSSSFYHS. The segment covering 57-71 has biased composition (polar residues); that stretch reads YSPSFPSSNRHTQSA. The tract at residues 57-92 is disordered; it reads YSPSFPSSNRHTQSAKALKESVDVASTEKPWLPNGT. Threonine 170 is subject to Phosphothreonine. Residues 287-300 carry the Polymerase core binding motif; that stretch reads DLVQGGLIGLLRGI. A DNA-binding region (H-T-H motif) is located at residues 461–480; that stretch reads WEDISKRIGLSRERVRQVGL.

This sequence belongs to the sigma-70 factor family. Interacts with SIB1 in chloroplast. Binds to CSK. The phosphorylation of Thr-170 mediated by oxidative conditions of plastoquinone (PQ) changes the promoter specificity, selectively inhibiting the transcription of the psaA gene, which encodes a PS-I protein. Phosphorylation of the holoenzyme occurs in the dark. This phosphorylation in response to plastoquinone redox state modification is mediated by CSK. As to expression, highly expressed in leaves, and to a lesser extent in roots. Expressed in old seedlings (8 days), cotyledons, hypocotyls, leaves, sepals and siliques.

The protein localises to the plastid. It is found in the chloroplast. Functionally, essential protein. Sigma factors are initiation factors that promote the attachment of plastid-encoded RNA polymerase (PEP) to specific initiation sites and are then released. Controls the transcription of the psaA gene and thus modulates photosystem stoichiometry. Thereby maintains a harmonious electron flow and photosynthetic efficiency. This chain is RNA polymerase sigma factor sigA (SIGA), found in Arabidopsis thaliana (Mouse-ear cress).